Reading from the N-terminus, the 353-residue chain is Putative glycosyltransferase TagX (353 aa).

Belongs to the glycosyltransferase 2 family.

The protein is Putative glycosyltransferase TagX (tagX) of Staphylococcus aureus (strain MSSA476).